We begin with the raw amino-acid sequence, 272 residues long: Shikimate dehydrogenase (NADP(+)) (272 aa).

Shikimate contacts are provided by residues 14 to 16 (SKS) and T61. The Proton acceptor role is filled by K65. Position 77 (E77) interacts with NADP(+). Shikimate-binding residues include N86 and D102. Residues 126 to 130 (GAGGA), 149 to 154 (NRTVSR), and M213 each bind NADP(+). Y215 contributes to the shikimate binding site. G237 provides a ligand contact to NADP(+).

Belongs to the shikimate dehydrogenase family. In terms of assembly, homodimer.

The enzyme catalyses shikimate + NADP(+) = 3-dehydroshikimate + NADPH + H(+). Its pathway is metabolic intermediate biosynthesis; chorismate biosynthesis; chorismate from D-erythrose 4-phosphate and phosphoenolpyruvate: step 4/7. Functionally, involved in the biosynthesis of the chorismate, which leads to the biosynthesis of aromatic amino acids. Catalyzes the reversible NADPH linked reduction of 3-dehydroshikimate (DHSA) to yield shikimate (SA). In Shigella flexneri, this protein is Shikimate dehydrogenase (NADP(+)).